A 150-amino-acid chain; its full sequence is Protein E6 (150 aa).

Zinc fingers lie at residues 31–67 (CVFC…CACC) and 104–140 (CYLC…CFHC).

It belongs to the papillomaviridae E6 protein family. Forms homodimers. Interacts with ubiquitin-protein ligase UBE3A/E6-AP; this interaction stimulates UBE3A ubiquitin activity. Interacts with host TP53 and EP300; this interaction inhibits TP53 activity.

The protein localises to the host cytoplasm. It is found in the host nucleus. In terms of biological role, plays a major role in the induction and maintenance of cellular transformation. E6 associates with host UBE3A/E6-AP ubiquitin-protein ligase and modulates its activity. Sequesters tumor suppressor TP53 in the host cytoplasm and modulates its activity by interacting with host EP300 that results in the reduction of TP53 acetylation and activation. In turn, apoptosis induced by DNA damage is inhibited. E6 also protects host keratinocytes from apoptosis by mediating the degradation of host BAK1. May also inhibit host immune response. The sequence is that of Protein E6 from Human papillomavirus 13.